The primary structure comprises 347 residues: 4-hydroxy-2-oxovalerate aldolase (347 aa).

In terms of domain architecture, Pyruvate carboxyltransferase spans 2–252 (ILISDATLRD…DTRTTFERVM (251 aa)). 10–11 (RD) is a binding site for substrate. A Mn(2+)-binding site is contributed by aspartate 11. Residue histidine 14 is the Proton acceptor of the active site. Residues serine 164 and histidine 191 each contribute to the substrate site. 2 residues coordinate Mn(2+): histidine 191 and histidine 193.

Belongs to the 4-hydroxy-2-oxovalerate aldolase family.

The enzyme catalyses (S)-4-hydroxy-2-oxopentanoate = acetaldehyde + pyruvate. The polypeptide is 4-hydroxy-2-oxovalerate aldolase (Burkholderia pseudomallei (strain 1106a)).